The following is a 325-amino-acid chain: Elongation factor P--(R)-beta-lysine ligase (325 aa).

Ser76–Glu78 is a binding site for substrate. ATP contacts are provided by residues Arg100–Glu102 and Asn109. Substrate is bound at residue Tyr118. Glu244–Leu245 is a binding site for ATP. Residue Glu251 coordinates substrate. Gly300 is a binding site for ATP.

It belongs to the class-II aminoacyl-tRNA synthetase family. EpmA subfamily. In terms of assembly, homodimer.

It catalyses the reaction D-beta-lysine + L-lysyl-[protein] + ATP = N(6)-((3R)-3,6-diaminohexanoyl)-L-lysyl-[protein] + AMP + diphosphate + H(+). With EpmB is involved in the beta-lysylation step of the post-translational modification of translation elongation factor P (EF-P). Catalyzes the ATP-dependent activation of (R)-beta-lysine produced by EpmB, forming a lysyl-adenylate, from which the beta-lysyl moiety is then transferred to the epsilon-amino group of a conserved specific lysine residue in EF-P. This chain is Elongation factor P--(R)-beta-lysine ligase, found in Klebsiella pneumoniae subsp. pneumoniae (strain ATCC 700721 / MGH 78578).